Consider the following 703-residue polypeptide: Ubiquitin-like modifier-activating enzyme ATG7 (703 aa).

At alanine 2 the chain carries N-acetylalanine. Residues 15-17 (FAP) carry the FAP motif motif. Lysine 45 is covalently cross-linked (Glycyl lysine isopeptide (Lys-Gly) (interchain with G-Cter in ubiquitin)). Cysteine 572 (glycyl thioester intermediate) is an active-site residue. Serine 698 is modified (phosphoserine).

It belongs to the ATG7 family. In terms of assembly, homodimer. Interacts with ATG3; this interaction is essential for the transfer of ATG8-like proteins's thioester from ATG7 to ATG3 and plays a role in the conjugation of ATG12 to ATG5. Interacts with ATG12. Forms intermediate conjugates with GABARAPL1. Forms intermediate conjugates with ATG8-like proteins such as GABARAP, GABARAPL2 or MAP1LC3A. Interacts with EP300 acetyltransferase. Interacts with FOXO1. Post-translationally, acetylated by EP300. Polyubiquitinated on Lys-45 via 'Lys-63'-linked ubiquitin by TRIM32; this modification positiely regulates ATG8 and ATG12 activating enzyme activity leading to initiation of autophagy under metabolic stress. Widely expressed, especially in kidney, liver, lymph nodes and bone marrow.

The protein resides in the cytoplasm. Its subcellular location is the preautophagosomal structure. In terms of biological role, E1-like activating enzyme involved in the 2 ubiquitin-like systems required for cytoplasm to vacuole transport (Cvt) and autophagy. Activates ATG12 for its conjugation with ATG5 as well as the ATG8 family proteins for their conjugation with phosphatidylethanolamine. Both systems are needed for the ATG8 association to Cvt vesicles and autophagosomes membranes. Required for autophagic death induced by caspase-8 inhibition. Facilitates LC3-I lipidation with phosphatidylethanolamine to form LC3-II which is found on autophagosomal membranes. Required for mitophagy which contributes to regulate mitochondrial quantity and quality by eliminating the mitochondria to a basal level to fulfill cellular energy requirements and preventing excess ROS production. Modulates p53/TP53 activity to regulate cell cycle and survival during metabolic stress. Also plays a key role in the maintenance of axonal homeostasis, the prevention of axonal degeneration, the maintenance of hematopoietic stem cells, the formation of Paneth cell granules, as well as in adipose differentiation. Plays a role in regulating the liver clock and glucose metabolism by mediating the autophagic degradation of CRY1 (clock repressor) in a time-dependent manner. The sequence is that of Ubiquitin-like modifier-activating enzyme ATG7 from Homo sapiens (Human).